The primary structure comprises 170 residues: Peptide methionine sulfoxide reductase MsrA (170 aa).

The active site involves Cys13.

This sequence belongs to the MsrA Met sulfoxide reductase family.

It carries out the reaction L-methionyl-[protein] + [thioredoxin]-disulfide + H2O = L-methionyl-(S)-S-oxide-[protein] + [thioredoxin]-dithiol. It catalyses the reaction [thioredoxin]-disulfide + L-methionine + H2O = L-methionine (S)-S-oxide + [thioredoxin]-dithiol. In terms of biological role, has an important function as a repair enzyme for proteins that have been inactivated by oxidation. Catalyzes the reversible oxidation-reduction of methionine sulfoxide in proteins to methionine. This chain is Peptide methionine sulfoxide reductase MsrA, found in Nocardia farcinica (strain IFM 10152).